We begin with the raw amino-acid sequence, 310 residues long: Transcription factor RAX3 (310 aa).

HTH myb-type domains follow at residues 9–62 (KANV…LNYL) and 63–117 (RPNI…KKKL). 2 consecutive DNA-binding regions (H-T-H motif) follow at residues 38–62 (WIAL…LNYL) and 90–113 (WSII…NTRL).

As to expression, ubiquitous.

Its subcellular location is the nucleus. Transcription activator. Positively regulates axillary meristems (AMs) formation and development, especially during inflorescence. The sequence is that of Transcription factor RAX3 (RAX3) from Arabidopsis thaliana (Mouse-ear cress).